Reading from the N-terminus, the 95-residue chain is Ubiquinol-cytochrome-c reductase complex assembly factor 3 (95 aa).

The Mitochondrial matrix segment spans residues Met-1–Leu-7. Residues Leu-8–Val-28 traverse the membrane as a helical segment. A mediates lipid-binding region spans residues Ala-23–Trp-80. The Mitochondrial intermembrane portion of the chain corresponds to Thr-29–Ala-95.

Belongs to the UQCC3 family. In terms of assembly, associates with the ubiquinol-cytochrome c reductase complex (mitochondrial respiratory chain complex III(CIII) or cytochrome b-c1 complex). Interacts with UQCC1. Forms a complex, named COMC, composed of UQCC1, UQCC2; UQCC3 and UQCC4; mediates MT-CYB hemylation and association with the first nuclear-encoded complex III subunit UQCRQ. Probably cleaved by OMA1 under mitochondrial stress conditions.

The protein localises to the mitochondrion inner membrane. Its function is as follows. Required for the assembly of the ubiquinol-cytochrome c reductase complex (mitochondrial respiratory chain complex III or cytochrome b-c1 complex), mediating cytochrome b recruitment and probably stabilization within the complex. Thereby, plays an important role in ATP production by mitochondria. Cardiolipin-binding protein, it may also control the cardiolipin composition of mitochondria membranes and their morphology. The polypeptide is Ubiquinol-cytochrome-c reductase complex assembly factor 3 (Bos taurus (Bovine)).